A 340-amino-acid chain; its full sequence is Guanine nucleotide-binding protein G(I)/G(S)/G(T) subunit beta-3 (340 aa).

WD repeat units follow at residues 53-83 (GHLAKIYAMHWATDSKLLVSASQDGKLIVWD), 95-125 (LRSSWVMTCAYAPSGNFVACGGLDNMCSIYN), 141-170 (AHTGYLSCCRFLDDNNIVTSSGDTTCALWD), 182-212 (GHTGDCMSLAVSPDYKLFISGACDASAKLWD), 224-254 (GHESDINAICFFPNGEAICTGSDDASCRLFD), 268-298 (SIICGITSVAFSLSGRLLFAGYDDFNCNVWD), and 310-340 (GHDNRVSCLGVTADGMAVATGSWDSFLKIWN).

Belongs to the WD repeat G protein beta family. G proteins are composed of 3 units, alpha, beta and gamma. Interacts with RASD2.

Functionally, guanine nucleotide-binding proteins (G proteins) are involved as a modulator or transducer in various transmembrane signaling systems. The beta and gamma chains are required for the GTPase activity, for replacement of GDP by GTP, and for G protein-effector interaction. The sequence is that of Guanine nucleotide-binding protein G(I)/G(S)/G(T) subunit beta-3 (Gnb3) from Mus musculus (Mouse).